The sequence spans 472 residues: 3-isopropylmalate dehydratase large subunit (472 aa).

The [4Fe-4S] cluster site is built by Cys347, Cys407, and Cys410.

The protein belongs to the aconitase/IPM isomerase family. LeuC type 1 subfamily. As to quaternary structure, heterodimer of LeuC and LeuD. The cofactor is [4Fe-4S] cluster.

The catalysed reaction is (2R,3S)-3-isopropylmalate = (2S)-2-isopropylmalate. The protein operates within amino-acid biosynthesis; L-leucine biosynthesis; L-leucine from 3-methyl-2-oxobutanoate: step 2/4. Functionally, catalyzes the isomerization between 2-isopropylmalate and 3-isopropylmalate, via the formation of 2-isopropylmaleate. The polypeptide is 3-isopropylmalate dehydratase large subunit (Parasynechococcus marenigrum (strain WH8102)).